Here is a 193-residue protein sequence, read N- to C-terminus: Orotate phosphoribosyltransferase (193 aa).

Residues Arg102, Lys103, Lys106, His108, and 129-137 (EDVVTTGGS) each bind 5-phospho-alpha-D-ribose 1-diphosphate. Residues Thr133 and Arg161 each contribute to the orotate site.

Belongs to the purine/pyrimidine phosphoribosyltransferase family. PyrE subfamily. In terms of assembly, homodimer. Requires Mg(2+) as cofactor.

The enzyme catalyses orotidine 5'-phosphate + diphosphate = orotate + 5-phospho-alpha-D-ribose 1-diphosphate. Its pathway is pyrimidine metabolism; UMP biosynthesis via de novo pathway; UMP from orotate: step 1/2. Its function is as follows. Catalyzes the transfer of a ribosyl phosphate group from 5-phosphoribose 1-diphosphate to orotate, leading to the formation of orotidine monophosphate (OMP). In Prochlorococcus marinus (strain NATL1A), this protein is Orotate phosphoribosyltransferase.